Here is a 396-residue protein sequence, read N- to C-terminus: Tryptophan synthase beta chain (396 aa).

Position 86 is an N6-(pyridoxal phosphate)lysine (Lys86).

It belongs to the TrpB family. In terms of assembly, tetramer of two alpha and two beta chains. Pyridoxal 5'-phosphate is required as a cofactor.

The catalysed reaction is (1S,2R)-1-C-(indol-3-yl)glycerol 3-phosphate + L-serine = D-glyceraldehyde 3-phosphate + L-tryptophan + H2O. It functions in the pathway amino-acid biosynthesis; L-tryptophan biosynthesis; L-tryptophan from chorismate: step 5/5. Its function is as follows. The beta subunit is responsible for the synthesis of L-tryptophan from indole and L-serine. The polypeptide is Tryptophan synthase beta chain (Proteus mirabilis (strain HI4320)).